We begin with the raw amino-acid sequence, 224 residues long: BTB/POZ domain-containing protein At5g48510 (224 aa).

The BTB domain maps to 24 to 98 (VDVMLKAKNS…ICSDGSMLSA (75 aa)).

In terms of assembly, interacts with CUL3A.

Its pathway is protein modification; protein ubiquitination. In terms of biological role, may act as a substrate-specific adapter of an E3 ubiquitin-protein ligase complex (CUL3-RBX1-BTB) which mediates the ubiquitination and subsequent proteasomal degradation of target proteins. This is BTB/POZ domain-containing protein At5g48510 from Arabidopsis thaliana (Mouse-ear cress).